An 854-amino-acid polypeptide reads, in one-letter code: Fibroblast growth factor receptor 1 (854 aa).

The first 20 residues, 1 to 20 (MSGLFFLLSELLILLGKINS), serve as a signal peptide directing secretion. Topologically, residues 21-383 (VSKKSLCHPE…NFFMNSVPLS (363 aa)) are extracellular. The 92-residue stretch at 29-120 (PELFKIDNKL…SSVFFLINVT (92 aa)) folds into the Ig-like C2-type 1 domain. Cysteine 50 and cysteine 102 are oxidised to a cystine. 11 N-linked (GlcNAc...) asparagine glycosylation sites follow: asparagine 95, asparagine 99, asparagine 110, asparagine 118, asparagine 140, asparagine 175, asparagine 202, asparagine 248, asparagine 283, asparagine 317, and asparagine 346. 2 Ig-like C2-type domains span residues 147 to 259 (PEMG…FTFT) and 268 to 369 (PHLT…LSVI). Cysteine 166 and cysteine 242 are joined by a disulfide. A disulfide bond links cysteine 288 and cysteine 353. Residues 384 to 404 (IFLVIGFFVAIILLSLIIYCF) traverse the membrane as a helical segment. Residues 405 to 854 (FLQYKNAVDS…SDYLEPKCLV (450 aa)) are Cytoplasmic-facing. Positions 551–822 (KITNKKLGEG…EIVEILIDII (272 aa)) constitute a Protein kinase domain. Residues 557-565 (LGEGAFGMV) and lysine 585 contribute to the ATP site. Aspartate 689 acts as the Proton acceptor in catalysis. Tyrosine 718 carries the phosphotyrosine; by autocatalysis modification.

The protein belongs to the protein kinase superfamily. Tyr protein kinase family. Fibroblast growth factor receptor subfamily. In terms of tissue distribution, expressed in brain, stem cells and the mesenchymal cells.

The protein resides in the membrane. It catalyses the reaction L-tyrosyl-[protein] + ATP = O-phospho-L-tyrosyl-[protein] + ADP + H(+). Its function is as follows. Receptor for basic fibroblast growth factor. In Dugesia japonica (Planarian), this protein is Fibroblast growth factor receptor 1 (FGFR1).